The primary structure comprises 786 residues: AT-rich interactive domain-containing protein 3 (786 aa).

The span at 1 to 16 (MENLTEIESTMESLTE) shows a compositional bias: low complexity. Disordered stretches follow at residues 1–182 (MENL…HHAD), 199–251 (SGDH…IPAN), and 395–420 (DTTV…NSSA). Composition is skewed to basic and acidic residues over residues 18 to 64 (ESER…HEDS) and 87 to 97 (DLPKIDDEKNS). Positions 130-139 (ENIVSSEVSS) are enriched in low complexity. 5 stretches are compositionally biased toward basic and acidic residues: residues 141 to 156 (ILKD…RDTA), 169 to 182 (KLSE…HHAD), 199 to 219 (SGDH…ENQS), 234 to 248 (AEER…HKEI), and 402 to 416 (NNKD…ERQD). Positions 494 to 585 (EEDQSAFMKE…ALLEYERHKV (92 aa)) constitute an ARID domain. The disordered stretch occupies residues 606 to 638 (QASGSGRARRDAASRAMQGWHSQRLNGNGEVSD). Positions 686-786 (VTVVDVGPPA…FVRVPLEQLE (101 aa)) constitute a sHSP domain.

This sequence belongs to the small heat shock protein (HSP20) family.

The protein localises to the nucleus. The polypeptide is AT-rich interactive domain-containing protein 3 (ARID3) (Arabidopsis thaliana (Mouse-ear cress)).